We begin with the raw amino-acid sequence, 319 residues long: Aspartate carbamoyltransferase catalytic subunit (319 aa).

Carbamoyl phosphate contacts are provided by Arg55 and Thr56. An L-aspartate-binding site is contributed by Lys83. Residues Arg105, His144, and Gln147 each contribute to the carbamoyl phosphate site. The L-aspartate site is built by Arg177 and Arg231. Gly272 and Pro273 together coordinate carbamoyl phosphate.

It belongs to the aspartate/ornithine carbamoyltransferase superfamily. ATCase family. In terms of assembly, heterododecamer (2C3:3R2) of six catalytic PyrB chains organized as two trimers (C3), and six regulatory PyrI chains organized as three dimers (R2).

The catalysed reaction is carbamoyl phosphate + L-aspartate = N-carbamoyl-L-aspartate + phosphate + H(+). The protein operates within pyrimidine metabolism; UMP biosynthesis via de novo pathway; (S)-dihydroorotate from bicarbonate: step 2/3. Catalyzes the condensation of carbamoyl phosphate and aspartate to form carbamoyl aspartate and inorganic phosphate, the committed step in the de novo pyrimidine nucleotide biosynthesis pathway. The polypeptide is Aspartate carbamoyltransferase catalytic subunit (Nocardia farcinica (strain IFM 10152)).